A 220-amino-acid polypeptide reads, in one-letter code: Ribose-5-phosphate isomerase A (220 aa).

Residues 28 to 31 (TGST), 81 to 84 (DGAD), and 94 to 97 (KGGG) each bind substrate. The Proton acceptor role is filled by Glu103. Residue Lys121 coordinates substrate.

This sequence belongs to the ribose 5-phosphate isomerase family. Homodimer.

The catalysed reaction is aldehydo-D-ribose 5-phosphate = D-ribulose 5-phosphate. Its pathway is carbohydrate degradation; pentose phosphate pathway; D-ribose 5-phosphate from D-ribulose 5-phosphate (non-oxidative stage): step 1/1. Its function is as follows. Catalyzes the reversible conversion of ribose-5-phosphate to ribulose 5-phosphate. This chain is Ribose-5-phosphate isomerase A, found in Shewanella baltica (strain OS185).